The primary structure comprises 360 residues: uncharacterized protein (360 aa).

A disordered region spans residues 1-33 (MSGRRKGCSAATASSSSSSPPSRLPPLPGHARR).

This sequence belongs to the herpesviridae US22 family.

This is an uncharacterized protein from Human cytomegalovirus (strain AD169) (HHV-5).